The chain runs to 276 residues: MSVKKKDLITLQDPEAKYPLPLIEKEQINHNTRRFRFGLPSPDHVLGLPVGNYVHLLAQINNELVIRAYTPVSSDDDQGFVDLIIKIYFKNVHPKYPEGGKMTQYLENMKIGDTILFRGPTGRLFYNEPGTLLIKTDKTSEPEKKLVHHLGMIAGGTGITPMLQLIRHITKDTSDGTRMSLLFANQTEEDILLRKELEEVATTHQNQFSLWYTLDRPPSGWEYSSGFITADMIKEHLPPPGEATLILVCGPPPLIQEAAHPSLEQLGYTKDMIFTY.

One can recognise an FAD-binding FR-type domain in the interval 15–127 (EAKYPLPLIE…RGPTGRLFYN (113 aa)). The residue at position 17 (Lys-17) is an N6-acetyllysine. A Phosphotyrosine modification is found at Tyr-18. Residues 107-137 (ENMK…IKTD) and 146-181 (LVHH…RMSL) contribute to the FAD site.

Belongs to the flavoprotein pyridine nucleotide cytochrome reductase family. Requires FAD as cofactor.

It catalyses the reaction 2 Fe(III)-[cytochrome b5] + NADH = 2 Fe(II)-[cytochrome b5] + NAD(+) + H(+). Its function is as follows. NADH-cytochrome b5 reductases are involved in desaturation and elongation of fatty acids, cholesterol biosynthesis, drug metabolism, and, in erythrocyte, methemoglobin reduction. Responsible for NADH-dependent lucigenin chemiluminescence in spermatozoa by reducing both lucigenin and 2-[4-iodophenyl]-3-[4-nitrophenyl]-5-[2,4-disulfophenyl]-2H tetrazolium monosodium salt (WST-1). The sequence is that of NADH-cytochrome b5 reductase 2 (Cyb5r2) from Rattus norvegicus (Rat).